A 658-amino-acid chain; its full sequence is UvrABC system protein B (658 aa).

Residues 25 to 178 enclose the Helicase ATP-binding domain; it reads KSLKNNNHYQ…KNFLLKLVEM (154 aa). Position 38-45 (38-45) interacts with ATP; that stretch reads GVTGSGKT. The short motif at 91 to 114 is the Beta-hairpin element; the sequence is HFDYYQPESYIPRRDLFIEKDSSI. The 175-residue stretch at 433 to 607 folds into the Helicase C-terminal domain; it reads QVQDLFDEIK…ELKLRDDEIR (175 aa). The 36-residue stretch at 623–658 folds into the UVR domain; sequence EKIIKELDKKMRECAKNLDFEEAMRLRDEIAKLRTL.

It belongs to the UvrB family. Forms a heterotetramer with UvrA during the search for lesions. Interacts with UvrC in an incision complex.

The protein localises to the cytoplasm. The UvrABC repair system catalyzes the recognition and processing of DNA lesions. A damage recognition complex composed of 2 UvrA and 2 UvrB subunits scans DNA for abnormalities. Upon binding of the UvrA(2)B(2) complex to a putative damaged site, the DNA wraps around one UvrB monomer. DNA wrap is dependent on ATP binding by UvrB and probably causes local melting of the DNA helix, facilitating insertion of UvrB beta-hairpin between the DNA strands. Then UvrB probes one DNA strand for the presence of a lesion. If a lesion is found the UvrA subunits dissociate and the UvrB-DNA preincision complex is formed. This complex is subsequently bound by UvrC and the second UvrB is released. If no lesion is found, the DNA wraps around the other UvrB subunit that will check the other stand for damage. This Helicobacter pylori (strain HPAG1) protein is UvrABC system protein B.